A 142-amino-acid chain; its full sequence is Hemoglobin subunit alpha (142 aa).

Positions 2–142 constitute a Globin domain; it reads VLSPADKTNI…VSTVLTSKYR (141 aa). Ser4 carries the phosphoserine modification. Lys8 bears the N6-succinyllysine mark. Thr9 is modified (phosphothreonine). Lys12 carries the post-translational modification N6-succinyllysine. Lys17 bears the N6-acetyllysine; alternate mark. Lys17 is modified (N6-succinyllysine; alternate). A Phosphotyrosine modification is found at Tyr25. The residue at position 36 (Ser36) is a Phosphoserine. N6-succinyllysine is present on Lys41. Position 50 is a phosphoserine (Ser50). His59 is a binding site for O2. Position 88 (His88) interacts with heme b. At Ser103 the chain carries Phosphoserine. Thr109 is modified (phosphothreonine). Phosphoserine is present on Ser125. 2 positions are modified to phosphothreonine: Thr135 and Thr138. Ser139 carries the phosphoserine modification.

The protein belongs to the globin family. In terms of assembly, heterotetramer of two alpha chains and two beta chains. In terms of tissue distribution, red blood cells.

Its function is as follows. Involved in oxygen transport from the lung to the various peripheral tissues. Hemopressin acts as an antagonist peptide of the cannabinoid receptor CNR1. Hemopressin-binding efficiently blocks cannabinoid receptor CNR1 and subsequent signaling. The sequence is that of Hemoglobin subunit alpha (HBA) from Canis latrans (Coyote).